The sequence spans 342 residues: Isopentenyl-diphosphate delta-isomerase (342 aa).

6–7 is a binding site for substrate; the sequence is RK. FMN-binding positions include Ser-63, 64–66, Ser-94, and Asn-122; that span reads SMT. 94–96 is a substrate binding site; the sequence is SMR. Residue Gln-157 participates in substrate binding. Glu-158 contributes to the Mg(2+) binding site. FMN-binding positions include Lys-189, Thr-219, 269–271, and 290–291; these read GLK and AG.

The protein belongs to the IPP isomerase type 2 family. As to quaternary structure, homooctamer. Dimer of tetramers. Requires FMN as cofactor. NADPH is required as a cofactor. Mg(2+) serves as cofactor.

Its subcellular location is the cytoplasm. It catalyses the reaction isopentenyl diphosphate = dimethylallyl diphosphate. Involved in the biosynthesis of isoprenoids. Catalyzes the 1,3-allylic rearrangement of the homoallylic substrate isopentenyl (IPP) to its allylic isomer, dimethylallyl diphosphate (DMAPP). This is Isopentenyl-diphosphate delta-isomerase from Rickettsia bellii (strain RML369-C).